A 324-amino-acid polypeptide reads, in one-letter code: Glyoxylate/hydroxypyruvate reductase B (324 aa).

Active-site residues include Arg237 and Glu266. His285 (proton donor) is an active-site residue.

Belongs to the D-isomer specific 2-hydroxyacid dehydrogenase family. GhrB subfamily. Homodimer.

It is found in the cytoplasm. The enzyme catalyses glycolate + NADP(+) = glyoxylate + NADPH + H(+). The catalysed reaction is (R)-glycerate + NAD(+) = 3-hydroxypyruvate + NADH + H(+). It carries out the reaction (R)-glycerate + NADP(+) = 3-hydroxypyruvate + NADPH + H(+). Functionally, catalyzes the NADPH-dependent reduction of glyoxylate and hydroxypyruvate into glycolate and glycerate, respectively. This Escherichia coli (strain SMS-3-5 / SECEC) protein is Glyoxylate/hydroxypyruvate reductase B.